The primary structure comprises 230 residues: MSRATLDKNPHEVASMFDAVARRYDLTNTVLSLGQDRFWRRETCAALGIGPGDRVLDLAAGTAVSTVELAASGAWCVAADFSVGMLSAGRQRDVPKVAGDATRLPFADESFDAVTISFGLRNVVDHVAGLEEMARVTRPGGRLVVCEFSTPTNRAFATLYKEYLMKALPRMARAVASNPDAYVYLAESIRAWPDQAGLARRIEAAGWSQVRWRNLTGGIVALHAAVKPPR.

S-adenosyl-L-methionine contacts are provided by residues Thr-62, Asp-80, 100-101 (DA), and Ser-117.

Belongs to the class I-like SAM-binding methyltransferase superfamily. MenG/UbiE family.

It carries out the reaction a 2-demethylmenaquinol + S-adenosyl-L-methionine = a menaquinol + S-adenosyl-L-homocysteine + H(+). It functions in the pathway quinol/quinone metabolism; menaquinone biosynthesis; menaquinol from 1,4-dihydroxy-2-naphthoate: step 2/2. In terms of biological role, methyltransferase required for the conversion of demethylmenaquinol (DMKH2) to menaquinol (MKH2). The chain is Demethylmenaquinone methyltransferase from Mycobacterium sp. (strain KMS).